The sequence spans 281 residues: NAC domain-containing protein 6 (281 aa).

An NAC domain is found at Leu4–Gln156. Disordered stretches follow at residues Gly84 to Asp109 and Leu211 to Glu249. A compositionally biased stretch (basic and acidic residues) spans Asn94–Asp109. Residues Asp109–Glu162 mediate DNA binding. Residues Gln229–Gln239 are compositionally biased toward low complexity.

It localises to the nucleus. In Arabidopsis thaliana (Mouse-ear cress), this protein is NAC domain-containing protein 6 (NAC006).